A 180-amino-acid chain; its full sequence is Oligoribonuclease (180 aa).

Residues Leu7–Leu168 form the Exonuclease domain. Tyr128 is a catalytic residue.

This sequence belongs to the oligoribonuclease family.

It localises to the cytoplasm. 3'-to-5' exoribonuclease specific for small oligoribonucleotides. This chain is Oligoribonuclease, found in Dichelobacter nodosus (strain VCS1703A).